Reading from the N-terminus, the 1210-residue chain is MISFAPFLSPEAIKHLQENERYSDQSQKRTAQQIEAIYTSGQNILVSASAGSGKTFVMVERILDKILRGVSIDRLFISTFTVKAATELRERIENKLYSQIAQTTDFQMKVYLTEQLQSLCQADIGTMDAFAQKVVSRYGYSIGISSQFRIMQDKAEQDVLKQEVFSKLFSEFMNQKEAPVFRALVKNFSGNCKDTSAFRELVYTCYSFSQSTENPKIWLQENFLSAAKTYQRLEDIPDHDIELLLLAMQDTANQLRDVTDMEDYGQLTKAGSRSAKYTKHLTIIEKLSDWVRDFKCLYGKAGLDRLIRDVTDLIPSGNDVTVSKVKYPVFKTLHQKLKQFRHLETILMYQKDCFPLLEQLQDFVLVFSEAYLAVKIQESAFEFSDIAHFAIKILEENTDIRQSYQQHYHEVMVDEYQDNNHMQERLLTLLSNGHNRFMVGDIKQSIYRFRQADPQIFNQKFRDYQKKPEQGKVILLKENFRSQSEVLNVSNAVFSHLMDESVGDVSYDEQHQLIAGSHAQTVPYLDRRAQLLLYNSDKDDGNAPSDSEGISFSEVTIVAKEIIKLHNDKGVPFEDITLLVSSRTRNDIISHTFNQYGIPIVTDGGQQNYLKSVEVMVMLDTLRTINNPRNDYALVALLRSPMFAFDEDDLARIALQKDNELDKDCLYDKIQRAVIGRGAHPELIHDTLLGKLNVFLKTLKSWRRYAKLGSLYDLIWKIFNDRFYFDFVASQAKAEQAQANLYALALRANQFEKSGYKGLYRFIKMIDKVLETQNDLADVEVAAPKQAVNLMTIHKSKGLQFPYVFILNCDKRFSMTDIHKSFILNRQHGIGIKYLADIKGLLGETTLNSVKVSMETLPYQLNKQELRLATLSEQMRLLYVAMTRAEKKVYFIGKASKSKSQDITDPKKLGKLLPLALREQLLTFQDWLLAIADIFSTEDLYFDVRFIEDSDLTQESVGRLQTPQLLNPDDLKDNRQSETIARALDMLEAVSQLNANYEAAIHLPTVRTPSQLKATYEPLLEPIGVDIIEKSSRSLSDFTLPHFSKKAKVEASHIGSALHQLMQVLPLSKPINQQTLLDALRGIDSNEEVKTALDLKKIESFFCDTSLGQFFQTYQKHLYREAPFAILKLDPISQEEYVLRGIIDAYFLFDDHIVLVDYKTDKYKQPIELKKRYQQQLELYAEALTQTYKLPVTKRYLVLMGGGKPEIVEV.

The region spanning 27 to 483 is the UvrD-like helicase ATP-binding domain; sequence QKRTAQQIEA…ILLKENFRSQ (457 aa). 48–55 lines the ATP pocket; that stretch reads ASAGSGKT. One can recognise a UvrD-like helicase C-terminal domain in the interval 512–798; sequence QLIAGSHAQT…NLMTIHKSKG (287 aa).

It belongs to the helicase family. AddA subfamily. As to quaternary structure, heterodimer of AddA and AddB/RexB. Mg(2+) serves as cofactor.

It catalyses the reaction Couples ATP hydrolysis with the unwinding of duplex DNA by translocating in the 3'-5' direction.. The enzyme catalyses ATP + H2O = ADP + phosphate + H(+). Its function is as follows. The heterodimer acts as both an ATP-dependent DNA helicase and an ATP-dependent, dual-direction single-stranded exonuclease. Recognizes the chi site generating a DNA molecule suitable for the initiation of homologous recombination. The AddA nuclease domain is required for chi fragment generation; this subunit has the helicase and 3' -&gt; 5' nuclease activities. The polypeptide is ATP-dependent helicase/nuclease subunit A (Streptococcus pyogenes serotype M5 (strain Manfredo)).